Consider the following 327-residue polypeptide: Glycerol-3-phosphate dehydrogenase [NAD(P)+] (327 aa).

Positions 11, 30, and 103 each coordinate NADPH. The sn-glycerol 3-phosphate site is built by Lys-103, Gly-131, and Ser-133. NADPH is bound at residue Ala-135. The sn-glycerol 3-phosphate site is built by Lys-186, Asp-243, Ser-253, Arg-254, and Asn-255. Residue Lys-186 is the Proton acceptor of the active site. Residue Arg-254 participates in NADPH binding. Residues Val-281 and Glu-283 each contribute to the NADPH site.

The protein belongs to the NAD-dependent glycerol-3-phosphate dehydrogenase family.

It localises to the cytoplasm. The enzyme catalyses sn-glycerol 3-phosphate + NAD(+) = dihydroxyacetone phosphate + NADH + H(+). The catalysed reaction is sn-glycerol 3-phosphate + NADP(+) = dihydroxyacetone phosphate + NADPH + H(+). It functions in the pathway membrane lipid metabolism; glycerophospholipid metabolism. Its function is as follows. Catalyzes the reduction of the glycolytic intermediate dihydroxyacetone phosphate (DHAP) to sn-glycerol 3-phosphate (G3P), the key precursor for phospholipid synthesis. This chain is Glycerol-3-phosphate dehydrogenase [NAD(P)+], found in Wolbachia pipientis wMel.